Here is a 562-residue protein sequence, read N- to C-terminus: Furostanol glycoside 26-O-beta-glucosidase (562 aa).

The N-terminal 44 residues, 1 to 44, are a transit peptide targeting the chloroplast; the sequence is MAAQLGLPLVSCHRGASQAASSSAHLVPGASAIMQAGNRRQKMR. A beta-D-glucoside is bound by residues glutamine 110, histidine 214, and 259-260; that span reads NE. The Proton donor role is filled by glutamate 260. Cysteine 279 and cysteine 285 are disulfide-bonded. A beta-D-glucoside-binding positions include tyrosine 401, glutamate 472, tryptophan 518, 525-526, and phenylalanine 534; that span reads EW. Catalysis depends on glutamate 472, which acts as the Nucleophile.

This sequence belongs to the glycosyl hydrolase 1 family. As to quaternary structure, heterodimer. The N-terminus of the larger subunit is blocked and the smaller subunit might be derived from the larger one.

Its subcellular location is the plastid. It localises to the chloroplast. It carries out the reaction protodioscin + H2O = 26-deglucoprotodioscin + D-glucose. With respect to regulation, partially inhibited by glucono-1,5-lactone, conduritol beta-epoxide and diosgenin, but not by beta-sitosterol or cholesterol. In terms of biological role, beta-glucosidase involved in saponin metabolism. Highly specific for the cleavage of C-26-bound glucose moiety of furostanol glycosides such as protogracillin and protodioscin. No activity with nuatigenin glycoside. Convers furostanol glycosides to spirostanol glycosides. The protein is Furostanol glycoside 26-O-beta-glucosidase of Hellenia speciosa (Crepe ginger).